A 148-amino-acid polypeptide reads, in one-letter code: Hemoglobin subunit beta (148 aa).

The Globin domain maps to 3–148 (DWTDAERSAI…VVSALGRQYH (146 aa)). Histidine 64 and histidine 93 together coordinate heme b.

This sequence belongs to the globin family. Heterotetramer of two alpha chains and two beta chains. As to expression, red blood cells.

Involved in oxygen transport from gills to the various peripheral tissues. The chain is Hemoglobin subunit beta (hbb) from Salmo salar (Atlantic salmon).